The following is a 1444-amino-acid chain: DNA polymerase III PolC-type (1444 aa).

The Exonuclease domain maps to 428–584 (YCVFDVETTG…FDAEATAYLA (157 aa)).

This sequence belongs to the DNA polymerase type-C family. PolC subfamily.

The protein resides in the cytoplasm. The catalysed reaction is DNA(n) + a 2'-deoxyribonucleoside 5'-triphosphate = DNA(n+1) + diphosphate. Its function is as follows. Required for replicative DNA synthesis. This DNA polymerase also exhibits 3' to 5' exonuclease activity. The chain is DNA polymerase III PolC-type from Listeria innocua serovar 6a (strain ATCC BAA-680 / CLIP 11262).